A 274-amino-acid chain; its full sequence is NADPH-dependent 7-cyano-7-deazaguanine reductase (274 aa).

Residues 1–33 (MPKKDALDHLSLGQHTDYPNEYDPKQLQPVPRS) form a disordered region. Residue 84-86 (IES) participates in substrate binding. 86-87 (SK) is an NADPH binding site. Cys183 (thioimide intermediate) is an active-site residue. Asp190 serves as the catalytic Proton donor. Position 222–223 (222–223 (HE)) interacts with substrate. Residue 250–251 (RG) coordinates NADPH.

The protein belongs to the GTP cyclohydrolase I family. QueF type 2 subfamily. In terms of assembly, homodimer.

It is found in the cytoplasm. The enzyme catalyses 7-aminomethyl-7-carbaguanine + 2 NADP(+) = 7-cyano-7-deazaguanine + 2 NADPH + 3 H(+). Its pathway is tRNA modification; tRNA-queuosine biosynthesis. Catalyzes the NADPH-dependent reduction of 7-cyano-7-deazaguanine (preQ0) to 7-aminomethyl-7-deazaguanine (preQ1). The sequence is that of NADPH-dependent 7-cyano-7-deazaguanine reductase from Idiomarina loihiensis (strain ATCC BAA-735 / DSM 15497 / L2-TR).